We begin with the raw amino-acid sequence, 493 residues long: uncharacterized protein (493 aa).

8 to 37 (DFLVVGGGTCGCVVAARLSEDPSATVMLLE) contributes to the FAD binding site. Residue His-429 is the Proton acceptor of the active site.

Belongs to the GMC oxidoreductase family. Requires FAD as cofactor.

This is an uncharacterized protein from Rhodococcus erythropolis (Arthrobacter picolinophilus).